The chain runs to 265 residues: Ribosomal RNA small subunit methyltransferase A (265 aa).

Residues His17, Leu19, Gly44, Glu65, Asp90, and Asn112 each coordinate S-adenosyl-L-methionine.

This sequence belongs to the class I-like SAM-binding methyltransferase superfamily. rRNA adenine N(6)-methyltransferase family. RsmA subfamily.

It is found in the cytoplasm. It carries out the reaction adenosine(1518)/adenosine(1519) in 16S rRNA + 4 S-adenosyl-L-methionine = N(6)-dimethyladenosine(1518)/N(6)-dimethyladenosine(1519) in 16S rRNA + 4 S-adenosyl-L-homocysteine + 4 H(+). In terms of biological role, specifically dimethylates two adjacent adenosines (A1518 and A1519) in the loop of a conserved hairpin near the 3'-end of 16S rRNA in the 30S particle. May play a critical role in biogenesis of 30S subunits. The polypeptide is Ribosomal RNA small subunit methyltransferase A (Xylella fastidiosa (strain Temecula1 / ATCC 700964)).